Consider the following 306-residue polypeptide: Palmitoyl-protein thioesterase ABHD10, mitochondrial (306 aa).

The N-terminal 52 residues, 1-52, are a transit peptide targeting the mitochondrion; the sequence is MAVARLAAVAAWVPCRSWGWAAVPFGPHRGLSVLLARIPQRAPRWLPACRQK. The 101-residue stretch at 78-178 folds into the AB hydrolase-1 domain; it reads IIFIPGYLSY…VVALIGVATA (101 aa). Catalysis depends on charge relay system residues serine 152, aspartate 249, and histidine 279.

The protein belongs to the AB hydrolase superfamily.

The protein resides in the mitochondrion. The enzyme catalyses S-hexadecanoyl-L-cysteinyl-[protein] + H2O = L-cysteinyl-[protein] + hexadecanoate + H(+). The catalysed reaction is mycophenolic acid O-acyl-beta-D-glucuronide + H2O = mycophenolate + D-glucuronate + H(+). Its activity is regulated as follows. Inhibited by palmostatin-B. Functionally, acts as an acyl-protein thioesterase that hydrolyzes fatty acids from acylated residues in proteins. Regulates the mitochondrial S-depalmitoylation of the nucleophilic active site residue of peroxiredoxin-5/PRDX5, a key antioxidant protein, therefore modulating mitochondrial antioxidant ability. Also catalyzes the deglucuronidation of mycophenolic acid acyl-glucuronide, an active metabolite of the immunosuppressant drug mycophenolate. The sequence is that of Palmitoyl-protein thioesterase ABHD10, mitochondrial from Homo sapiens (Human).